Consider the following 357-residue polypeptide: Tetraacyldisaccharide 4'-kinase (357 aa).

49 to 56 is an ATP binding site; sequence TIGGTGKT.

Belongs to the LpxK family.

The catalysed reaction is a lipid A disaccharide + ATP = a lipid IVA + ADP + H(+). It functions in the pathway glycolipid biosynthesis; lipid IV(A) biosynthesis; lipid IV(A) from (3R)-3-hydroxytetradecanoyl-[acyl-carrier-protein] and UDP-N-acetyl-alpha-D-glucosamine: step 6/6. Its function is as follows. Transfers the gamma-phosphate of ATP to the 4'-position of a tetraacyldisaccharide 1-phosphate intermediate (termed DS-1-P) to form tetraacyldisaccharide 1,4'-bis-phosphate (lipid IVA). The polypeptide is Tetraacyldisaccharide 4'-kinase (Porphyromonas gingivalis (strain ATCC BAA-308 / W83)).